The primary structure comprises 1818 residues: Unconventional myosin-Vb (1818 aa).

Positions 8–60 (TRYTRVWIPDPDEVWRSAELTKDYKEGDKSLQLRLEDDTILEYPVDVQNNQVP) constitute a Myosin N-terminal SH3-like domain. The requires for interaction with LIMA1 stretch occupies residues 21–40 (VWRSAELTKDYKEGDKSLQL). The Myosin motor domain occupies 69 to 762 (VGENDLTALS…QVAYLEKLRA (694 aa)). Residue 163-170 (GESGAGKT) participates in ATP binding. The actin-binding stretch occupies residues 641-663 (LNLLMETLNATTPHYVRCIKPND). IQ domains follow at residues 765–794 (FREA…ATLS), 788–817 (LRAA…TRAA), 813–842 (RTRA…ATVI), 836–865 (VCRA…EHKA), 861–890 (MEHK…AAIV), and 884–913 (ERDA…EARS). Disordered stretches follow at residues 1086–1120 (LRDE…EIGD) and 1161–1188 (QAQL…VDQD). Residues 1098–1118 (PSNQSSLESDSNYPSISTSEI) are compositionally biased toward polar residues. Coiled coils occupy residues 1140–1261 (MTVF…LILR) and 1313–1415 (LEAQ…ALAQ). Ser1416 bears the Phosphoserine mark. The Dilute domain occupies 1496 to 1773 (SSTINGIKKV…IRTIQAQLQE (278 aa)).

This sequence belongs to the TRAFAC class myosin-kinesin ATPase superfamily. Myosin family. As to quaternary structure, component of the CART complex, at least composed of ACTN4, HGS/HRS, MYO5B and TRIM3. Interacts with RAB11FIP2. Interacts with RAB11A and RAB8A. Found in a complex with CFTR and RAB11A. Interacts with NPC1L1. Interacts with LIMA1.

The protein resides in the cytoplasm. Its function is as follows. May be involved in vesicular trafficking via its association with the CART complex. The CART complex is necessary for efficient transferrin receptor recycling but not for EGFR degradation. Required in a complex with RAB11A and RAB11FIP2 for the transport of NPC1L1 to the plasma membrane. Together with RAB11A participates in CFTR trafficking to the plasma membrane and TF (transferrin) recycling in nonpolarized cells. Together with RAB11A and RAB8A participates in epithelial cell polarization. Together with RAB25 regulates transcytosis. Required for proper localization of bile salt export pump ABCB11 at the apical/canalicular plasma membrane of hepatocytes. The protein is Unconventional myosin-Vb (Myo5b) of Mus musculus (Mouse).